A 273-amino-acid polypeptide reads, in one-letter code: Proteasome subunit beta type-10 (273 aa).

Methionine 1 is modified (N-acetylmethionine). Residues 1 to 39 (MQKTVLEPQRGFSFENCERNAALQRALPGLRVPHARKTG) constitute a propeptide, removed in mature form. Threonine 40 functions as the Nucleophile in the catalytic mechanism. Serine 230 carries the phosphoserine modification.

The protein belongs to the peptidase T1B family. In terms of assembly, the 26S proteasome consists of a 20S proteasome core and two 19S regulatory subunits. The 20S proteasome core is composed of 28 subunits that are arranged in four stacked rings, resulting in a barrel-shaped structure. The two end rings are each formed by seven alpha subunits, and the two central rings are each formed by seven beta subunits. The catalytic chamber with the active sites is on the inside of the barrel. Component of the immunoproteasome, where it displaces the equivalent housekeeping subunit PSMB7. Component of the spermatoproteasome, a form of the proteasome specifically found in testis. Post-translationally, autocleaved. The resulting N-terminal Thr residue of the mature subunit is responsible for the nucleophile proteolytic activity.

Its subcellular location is the cytoplasm. The protein resides in the nucleus. The catalysed reaction is Cleavage of peptide bonds with very broad specificity.. Its function is as follows. The proteasome is a multicatalytic proteinase complex which is characterized by its ability to cleave peptides with Arg, Phe, Tyr, Leu, and Glu adjacent to the leaving group at neutral or slightly basic pH. The proteasome has an ATP-dependent proteolytic activity. This subunit is involved in antigen processing to generate class I binding peptides. This chain is Proteasome subunit beta type-10 (PSMB10), found in Bos taurus (Bovine).